The following is a 482-amino-acid chain: tRNA sulfurtransferase (482 aa).

The region spanning 61–165 (LAIRDALTRI…DDRLLLIKGR (105 aa)) is the THUMP domain. ATP contacts are provided by residues 183-184 (LI), Lys-265, Gly-287, and Gln-296. An intrachain disulfide couples Cys-344 to Cys-456. Residues 404–482 (FGPNDVILDI…GFNNVKVYRP (79 aa)) enclose the Rhodanese domain. Cys-456 serves as the catalytic Cysteine persulfide intermediate.

The protein belongs to the ThiI family.

It localises to the cytoplasm. It catalyses the reaction [ThiI sulfur-carrier protein]-S-sulfanyl-L-cysteine + a uridine in tRNA + 2 reduced [2Fe-2S]-[ferredoxin] + ATP + H(+) = [ThiI sulfur-carrier protein]-L-cysteine + a 4-thiouridine in tRNA + 2 oxidized [2Fe-2S]-[ferredoxin] + AMP + diphosphate. The catalysed reaction is [ThiS sulfur-carrier protein]-C-terminal Gly-Gly-AMP + S-sulfanyl-L-cysteinyl-[cysteine desulfurase] + AH2 = [ThiS sulfur-carrier protein]-C-terminal-Gly-aminoethanethioate + L-cysteinyl-[cysteine desulfurase] + A + AMP + 2 H(+). Its pathway is cofactor biosynthesis; thiamine diphosphate biosynthesis. In terms of biological role, catalyzes the ATP-dependent transfer of a sulfur to tRNA to produce 4-thiouridine in position 8 of tRNAs, which functions as a near-UV photosensor. Also catalyzes the transfer of sulfur to the sulfur carrier protein ThiS, forming ThiS-thiocarboxylate. This is a step in the synthesis of thiazole, in the thiamine biosynthesis pathway. The sulfur is donated as persulfide by IscS. This is tRNA sulfurtransferase from Escherichia coli O139:H28 (strain E24377A / ETEC).